A 565-amino-acid polypeptide reads, in one-letter code: Glucose-6-phosphate isomerase (565 aa).

Residue glutamate 373 is the Proton donor of the active site. Catalysis depends on residues histidine 404 and lysine 530.

This sequence belongs to the GPI family.

The protein localises to the cytoplasm. It carries out the reaction alpha-D-glucose 6-phosphate = beta-D-fructose 6-phosphate. The protein operates within carbohydrate biosynthesis; gluconeogenesis. It functions in the pathway carbohydrate degradation; glycolysis; D-glyceraldehyde 3-phosphate and glycerone phosphate from D-glucose: step 2/4. Functionally, catalyzes the reversible isomerization of glucose-6-phosphate to fructose-6-phosphate. The chain is Glucose-6-phosphate isomerase from Corynebacterium jeikeium (strain K411).